Reading from the N-terminus, the 523-residue chain is Aldehyde oxidase GLOX (523 aa).

Residues methionine 1–leucine 19 form the signal peptide.

The protein localises to the secreted. Its subcellular location is the cell wall. The catalysed reaction is an aldehyde + O2 + H2O = a carboxylate + H2O2 + H(+). In terms of biological role, catalyzes the oxidation of aldehydes to the corresponding carboxylate by coupling the reaction to the reduction of dioxygen to hydrogen peroxide. Substrates include glyoxal and other aldehydes. Involved in disease resistance against the grapevine powdery mildew E.necator. Is sufficient to confer disease resistance to E.necator. Can produce hydrogen peroxide in response to E.necator infection, and this may directly play a role in the defense mechanism during plant-pathogen interactions. The chain is Aldehyde oxidase GLOX from Vitis pseudoreticulata (Chinese wild grapevine).